Here is a 493-residue protein sequence, read N- to C-terminus: Transcript termination protein A18 (493 aa).

Residues 100–256 (MIESKRPLYI…NSIINIAKLS (157 aa)) enclose the Helicase ATP-binding domain. 113 to 120 (LACGFGKT) contacts ATP. The short motif at 206 to 209 (DESH) is the DESH box element.

This sequence belongs to the helicase family. Poxviruses subfamily. As to quaternary structure, interacts with G2. Might be part of a transcription complex composed at least of G2, A18, and H5.

The protein resides in the virion. DNA helicase which seems to act as a postreplicative transcription termination factor. Involved in ATP-dependent release of nascent RNA. Forms a stable complex with single-stranded DNA, and to a lesser extent RNA. In Homo sapiens (Human), this protein is Transcript termination protein A18.